A 126-amino-acid polypeptide reads, in one-letter code: Protein Wnt-1 (126 aa).

Ser-1 carries O-palmitoleoyl serine; by PORCN lipidation. Cys-92 and Cys-107 are oxidised to a cystine. N-linked (GlcNAc...) asparagine glycosylation is found at Asn-93 and Asn-123.

The protein belongs to the Wnt family. Post-translationally, palmitoleoylation is required for efficient binding to frizzled receptors. Palmitoleoylation is necessary for proper trafficking to cell surface. Depalmitoleoylated by NOTUM, leading to inhibit Wnt signaling pathway.

Its subcellular location is the secreted. The protein resides in the extracellular space. It localises to the extracellular matrix. In terms of biological role, ligand for members of the frizzled family of seven transmembrane receptors. Acts in the canonical Wnt signaling pathway by promoting beta-catenin-dependent transcriptional activation. Plays an essential role in the development of the embryonic brain and central nervous system (CNS). Has a role in osteoblast function, bone development and bone homeostasis. This Pituophis melanoleucus (Pine snake) protein is Protein Wnt-1 (WNT-1).